The sequence spans 228 residues: Urease accessory protein UreF (228 aa).

This sequence belongs to the UreF family. As to quaternary structure, ureD, UreF and UreG form a complex that acts as a GTP-hydrolysis-dependent molecular chaperone, activating the urease apoprotein by helping to assemble the nickel containing metallocenter of UreC. The UreE protein probably delivers the nickel.

It is found in the cytoplasm. Required for maturation of urease via the functional incorporation of the urease nickel metallocenter. This is Urease accessory protein UreF from Prochlorococcus marinus subsp. pastoris (strain CCMP1986 / NIES-2087 / MED4).